The following is a 422-amino-acid chain: Keratin, type II cytoskeletal 80 (422 aa).

Residues 1–82 (MACRSCVVGF…DPAIQQQKNN (82 aa)) form a head region. Position 45 is a phosphoserine (S45). A coil 1A region spans residues 83-118 (EKEEMKVLNDKFASLIGKVQALEQRNQLLETRWHFL). One can recognise an IF rod domain in the interval 83–394 (EKEEMKVLND…KLMEGEESRM (312 aa)). The segment at 119 to 135 (QSQDSATFDLGHLYEEY) is linker 1. Residues 136–227 (QGRLQEELRK…SIYEQELKDL (92 aa)) are coil 1B. Residues 228-251 (AAQLKDVSVTVGMDSRCHIDLSGI) form a linker 12 region. The coil 2 stretch occupies residues 252–390 (VEEVKAQYDA…ATYRKLMEGE (139 aa)). The tail stretch occupies residues 391–422 (ESRMDMPSATVVSAVQARCRTAPTLPHPLCSL).

The protein belongs to the intermediate filament family. As to quaternary structure, heterotetramer of two type I and two type II keratins.

The sequence is that of Keratin, type II cytoskeletal 80 (KRT80) from Bos taurus (Bovine).